Here is a 114-residue protein sequence, read N- to C-terminus: Pole-localizer protein TmaR (114 aa).

Residues Arg-70–Asn-111 are a coiled coil. The interval Lys-89–Lys-114 is disordered.

This sequence belongs to the pole-localizer TmaR family.

Its subcellular location is the cytoplasm. In terms of biological role, pole-localizer protein involved in the regulation of several cellular processes. The sequence is that of Pole-localizer protein TmaR from Haemophilus influenzae (strain PittEE).